We begin with the raw amino-acid sequence, 132 residues long: MTNVFTIDAFREEVKKKYAPVLIGLSDDVTVELKPLLKLGQKAREAVVEVFKEFADIPDLEEDDDDELVDEYSLQVCDIIAKAFRLIATKPKKLIAALDEEPDPRIRAELYAAVLNTWKRETQLGEAAPSPS.

Belongs to the L5likevirus tail assembly protein family. As to quaternary structure, interacts with tail assembly protein Gp25 and tape measure protein.

Functionally, promotes tail assembly by creating a scaffold for the tail tube proteins. The tail assembly proteins Gp24 and Gp25 would wrap the linear tape measure protein to create a tail assembly scaffold. It would allow polymerization of tail tube protein during which Gp24 and Gp25 are released and therefore are absent from the mature virion. The tail assembly protein Gp25 is produced by a rare -1 ribosomal frameshift. The ratio Gp24/Gp25 is important for proper tail assembly. The polypeptide is Tail assembly protein Gp24 (24) (Mycobacterium (Mycobacteriophage L5)).